The primary structure comprises 427 residues: Serine hydroxymethyltransferase (427 aa).

Residues leucine 122 and 126 to 128 (GHL) contribute to the (6S)-5,6,7,8-tetrahydrofolate site. N6-(pyridoxal phosphate)lysine is present on lysine 231. (6S)-5,6,7,8-tetrahydrofolate-binding positions include glutamate 247 and 355–357 (SPF).

This sequence belongs to the SHMT family. Homodimer. It depends on pyridoxal 5'-phosphate as a cofactor.

It localises to the cytoplasm. It carries out the reaction (6R)-5,10-methylene-5,6,7,8-tetrahydrofolate + glycine + H2O = (6S)-5,6,7,8-tetrahydrofolate + L-serine. Its pathway is one-carbon metabolism; tetrahydrofolate interconversion. It participates in amino-acid biosynthesis; glycine biosynthesis; glycine from L-serine: step 1/1. In terms of biological role, catalyzes the reversible interconversion of serine and glycine with tetrahydrofolate (THF) serving as the one-carbon carrier. This reaction serves as the major source of one-carbon groups required for the biosynthesis of purines, thymidylate, methionine, and other important biomolecules. Also exhibits THF-independent aldolase activity toward beta-hydroxyamino acids, producing glycine and aldehydes, via a retro-aldol mechanism. The sequence is that of Serine hydroxymethyltransferase from Synechocystis sp. (strain ATCC 27184 / PCC 6803 / Kazusa).